A 494-amino-acid polypeptide reads, in one-letter code: MTKLTQLTLTQAREGLAQGEFTSVELTEAYLKAMEQARPLNAYVLETPEIALEMAKESDRRIASGETGPLEGIPLGIKDMFATEGVRTTACAKILDNFIPQYESTVTSHLWRDGAVLLGKLNNDEFAMGSSNETSAFGPVVSPWRRDGDETPLVPGGSSGGSAAAVAAFLCAGATGTDTGGSIRQPAAFTGTVGIKPTYGRCSRWGIVAFASSLDQAGPFARTVNDAAVLLKSMAGYDPKDSTCVNRPVPDYEEAVGASIKGKKIGIPREYRMDGMSDEIDALWTEGARFLKDAGAEIVDISLPHTQYALPAYYIVAPAEASSNLARYDGVRFGERVPGRDVVEMYENTRAAGFGPEVRRRIMIGTYVLSAGYYDAYYLRAQKVRSLIKRDFDQVFAQGVDAVLTPATPSPAFGIGEKLKADPVEMYLNDVFTVTVNMAGLPGIAVPAGLSADGLPLGLQLIGRPFEEETLFSLAEVIEEAAGRFPVDKQWWRG.

Residues Lys-78 and Ser-158 each act as charge relay system in the active site. Ser-182 (acyl-ester intermediate) is an active-site residue.

It belongs to the amidase family. GatA subfamily. As to quaternary structure, heterotrimer of A, B and C subunits.

It carries out the reaction L-glutamyl-tRNA(Gln) + L-glutamine + ATP + H2O = L-glutaminyl-tRNA(Gln) + L-glutamate + ADP + phosphate + H(+). Functionally, allows the formation of correctly charged Gln-tRNA(Gln) through the transamidation of misacylated Glu-tRNA(Gln) in organisms which lack glutaminyl-tRNA synthetase. The reaction takes place in the presence of glutamine and ATP through an activated gamma-phospho-Glu-tRNA(Gln). This chain is Glutamyl-tRNA(Gln) amidotransferase subunit A, found in Xanthobacter autotrophicus (strain ATCC BAA-1158 / Py2).